A 450-amino-acid polypeptide reads, in one-letter code: MSKRAYFGTDGIRGQANRHPMTAEVALRVGMAAGKLFMSKDDRRHLVVIGKDTRLSGYMIEPALVAGFTSVGMDVRLFGPLPTPGVAMMTRSLRADLGVMISASHNHFADNGIKLFGPDGYKLSDEKELEIEALMDQGLQEGLATPDKLGRVQRIDDCQARYVEIAKATFPKGLSLAGMRIVIDCANGAAYKVAPETLYELGAEVIRVGVEPNGFNINEECGSTHPAAMSRLVKEYRADIGIALDGDADRLVICDEKGQVVDGDQIMALIADSWAKAGRLQGGGVVATVMSNLGLERFLKARNLKLERTQVGDRYVMARMREGGFNVGGEQSGHVILSDLSTTGDGLLAALQVLAVLQESDRPMSALARQFEPVPQKLENVRFGSGKPLEHDAVKKALAEAEQRLNGSGRIVVRASGTEPLIRVMAEGDDEKLVSQVVKEIVGAVKKVAA.

The active-site Phosphoserine intermediate is S104. Mg(2+) contacts are provided by S104, D245, D247, and D249. At S104 the chain carries Phosphoserine.

This sequence belongs to the phosphohexose mutase family. The cofactor is Mg(2+). Activated by phosphorylation.

It catalyses the reaction alpha-D-glucosamine 1-phosphate = D-glucosamine 6-phosphate. In terms of biological role, catalyzes the conversion of glucosamine-6-phosphate to glucosamine-1-phosphate. The chain is Phosphoglucosamine mutase from Phenylobacterium zucineum (strain HLK1).